A 153-amino-acid chain; its full sequence is Large ribosomal subunit protein uL30 (153 aa).

This sequence belongs to the universal ribosomal protein uL30 family. Part of the 50S ribosomal subunit.

In Methanosarcina acetivorans (strain ATCC 35395 / DSM 2834 / JCM 12185 / C2A), this protein is Large ribosomal subunit protein uL30.